Reading from the N-terminus, the 68-residue chain is DNA-directed RNA polymerase subunit Rpo10 (68 aa).

Residues Cys-7, Cys-10, Cys-44, and Cys-45 each contribute to the Zn(2+) site.

Belongs to the archaeal Rpo10/eukaryotic RPB10 RNA polymerase subunit family. In terms of assembly, part of the RNA polymerase complex. Requires Zn(2+) as cofactor.

It localises to the cytoplasm. It catalyses the reaction RNA(n) + a ribonucleoside 5'-triphosphate = RNA(n+1) + diphosphate. Its function is as follows. DNA-dependent RNA polymerase (RNAP) catalyzes the transcription of DNA into RNA using the four ribonucleoside triphosphates as substrates. In Methanococcus vannielii (strain ATCC 35089 / DSM 1224 / JCM 13029 / OCM 148 / SB), this protein is DNA-directed RNA polymerase subunit Rpo10.